Reading from the N-terminus, the 398-residue chain is 2,3-bisphosphoglycerate-independent phosphoglycerate mutase (398 aa).

Belongs to the BPG-independent phosphoglycerate mutase family. A-PGAM subfamily.

It catalyses the reaction (2R)-2-phosphoglycerate = (2R)-3-phosphoglycerate. It functions in the pathway carbohydrate degradation; glycolysis; pyruvate from D-glyceraldehyde 3-phosphate: step 3/5. Functionally, catalyzes the interconversion of 2-phosphoglycerate and 3-phosphoglycerate. The sequence is that of 2,3-bisphosphoglycerate-independent phosphoglycerate mutase from Methanosarcina barkeri (strain Fusaro / DSM 804).